A 205-amino-acid chain; its full sequence is Small ribosomal subunit protein uS4 (205 aa).

Residues 1–16 show a composition bias toward basic and acidic residues; sequence MSKRESSKYKIDRRMG. Positions 1-46 are disordered; sequence MSKRESSKYKIDRRMGENIWGRPKSPVNRREYGPGQHGQRRKGKLS. One can recognise an S4 RNA-binding domain in the interval 94–157; it reads SRLDAIVYRA…KQLVIVLESV (64 aa).

The protein belongs to the universal ribosomal protein uS4 family. In terms of assembly, part of the 30S ribosomal subunit. Contacts protein S5. The interaction surface between S4 and S5 is involved in control of translational fidelity.

Its function is as follows. One of the primary rRNA binding proteins, it binds directly to 16S rRNA where it nucleates assembly of the body of the 30S subunit. Functionally, with S5 and S12 plays an important role in translational accuracy. This is Small ribosomal subunit protein uS4 from Rhizobium rhizogenes (strain K84 / ATCC BAA-868) (Agrobacterium radiobacter).